A 419-amino-acid chain; its full sequence is L-rhamnose isomerase (419 aa).

Positions 262, 294, and 296 each coordinate Mn(2+).

It belongs to the rhamnose isomerase family. In terms of assembly, homotetramer. It depends on Mn(2+) as a cofactor.

The protein resides in the cytoplasm. The enzyme catalyses L-rhamnopyranose = L-rhamnulose. It functions in the pathway carbohydrate degradation; L-rhamnose degradation; glycerone phosphate from L-rhamnose: step 1/3. Catalyzes the interconversion of L-rhamnose and L-rhamnulose. The protein is L-rhamnose isomerase of Escherichia coli O157:H7.